We begin with the raw amino-acid sequence, 217 residues long: External core antigen (217 aa).

Residues 1–20 (MYLFHLCLVFACVSCPTVQA) form the signal peptide. Residues 26 to 28 (GWL) form an HBEAG region. Positions 181–210 (RRGSARVVRSPRRRTPSPRRRRSQSPRRRP) are enriched in basic residues. Positions 181-217 (RRGSARVVRSPRRRTPSPRRRRSQSPRRRPQSPASNC) are disordered. The stretch at 190–196 (SPRRRTP) is one 1; half-length repeat. The interval 190 to 211 (SPRRRTPSPRRRRSQSPRRRPQ) is 3 X 8 AA approximate repeats of S-P-R-R-R-R-[PS]-Q. Residues 190 to 217 (SPRRRTPSPRRRRSQSPRRRPQSPASNC) constitute a propeptide that is removed on maturation. 2 consecutive repeat copies span residues 197-204 (SPRRRRSQ) and 205-211 (SPRRRPQ).

Belongs to the orthohepadnavirus precore antigen family. Homodimerizes. Phosphorylated. In terms of processing, cleaved by host furin.

It localises to the secreted. The protein localises to the host nucleus. Functionally, may regulate immune response to the intracellular capsid in acting as a T-cell tolerogen, by having an immunoregulatory effect which prevents destruction of infected cells by cytotoxic T-cells. This immune regulation may predispose to chronicity during perinatal infections and prevent severe liver injury during adult infections. The sequence is that of External core antigen from Urocitellus parryii kennicottii (ASHV).